The primary structure comprises 280 residues: Bifunctional protein FolD (280 aa).

NADP(+) contacts are provided by residues Gly161–Ser163, Ser186, and Ile227.

The protein belongs to the tetrahydrofolate dehydrogenase/cyclohydrolase family. In terms of assembly, homodimer.

It carries out the reaction (6R)-5,10-methylene-5,6,7,8-tetrahydrofolate + NADP(+) = (6R)-5,10-methenyltetrahydrofolate + NADPH. It catalyses the reaction (6R)-5,10-methenyltetrahydrofolate + H2O = (6R)-10-formyltetrahydrofolate + H(+). Its pathway is one-carbon metabolism; tetrahydrofolate interconversion. Catalyzes the oxidation of 5,10-methylenetetrahydrofolate to 5,10-methenyltetrahydrofolate and then the hydrolysis of 5,10-methenyltetrahydrofolate to 10-formyltetrahydrofolate. The polypeptide is Bifunctional protein FolD (Caldanaerobacter subterraneus subsp. tengcongensis (strain DSM 15242 / JCM 11007 / NBRC 100824 / MB4) (Thermoanaerobacter tengcongensis)).